We begin with the raw amino-acid sequence, 1479 residues long: ESX secretion system protein EccC (1479 aa).

Residues 1 to 235 (MSQLWVLYET…SQEGDGDPRG (235 aa)) are Cytoplasmic-facing. Residues 236-256 (LWLMVLPPVMMLLVIGAVALI) form a helical membrane-spanning segment. At 257-259 (QPR) the chain is on the extracellular side. The helical transmembrane segment at 260–280 (GVFIMISIAMFATTIVTSTAQ) threads the bilayer. The Cytoplasmic segment spans residues 281–1479 (YMREKKARQM…DQKIQIPKVE (1199 aa)). Positions 291–321 (RKEKRRRIYTNYLEQKREELQALSEKQRNVL) form a coiled coil. FtsK domains lie at 652–848 (NDVV…NDSK) and 984–1168 (QSDY…SEKF). Residue 672-679 (GTTGSGKS) coordinates ATP. Glutamate 785 is an active-site residue. ATP-binding positions include 1004–1009 (GYGKST), asparagine 1036, aspartate 1105, isoleucine 1197, aspartate 1206, 1287–1291 (RKGKT), and isoleucine 1475. The FtsK 3 domain maps to 1267–1444 (VRPVAINMRT…ILVTKKSEQS (178 aa)).

In terms of assembly, whole protein oligomerizes in native gels. Part of the ESX / type VII secretion system (T7SS), which is composed of cytosolic and membrane components. The ESX membrane complex is composed of EccB, EccC and EccD.

The protein localises to the cell membrane. With respect to regulation, esxB binding to the third FtsK domain causes multimerization; a subsequent unknown step relieves the allosteric inhibition of linker 2 on FtsK domain 1, activating the ATPase activity. Part of the ESX specialized secretion system, which exports proteins from the cell including EsxA (ESAT-6) and EsxB (CFP-10). Might be the translocase subunit. Probably only the first FtsK domain can hydrolyze ATP. The sequence is that of ESX secretion system protein EccC from Geobacillus thermodenitrificans (strain NG80-2).